Consider the following 257-residue polypeptide: Ribosome maturation factor RimP (257 aa).

A disordered region spans residues 182 to 257 (LRRGGPPAAD…SRLKDRDSLH (76 aa)). Residues 191 to 205 (DEADEAEEAEDEEVA) show a composition bias toward acidic residues. The span at 224–236 (KASPAAKPQKQAR) shows a compositional bias: low complexity.

It belongs to the RimP family.

Its subcellular location is the cytoplasm. Functionally, required for maturation of 30S ribosomal subunits. The sequence is that of Ribosome maturation factor RimP from Methylobacterium radiotolerans (strain ATCC 27329 / DSM 1819 / JCM 2831 / NBRC 15690 / NCIMB 10815 / 0-1).